The following is a 521-amino-acid chain: Probable glycogen synthase (521 aa).

The protein belongs to the glycosyltransferase 1 family. Bacterial/plant glycogen synthase subfamily.

It carries out the reaction [(1-&gt;4)-alpha-D-glucosyl](n) + ADP-alpha-D-glucose = [(1-&gt;4)-alpha-D-glucosyl](n+1) + ADP + H(+). The protein operates within glycan biosynthesis; glycogen biosynthesis. In terms of biological role, synthesizes alpha-1,4-glucan chains using ADP-glucose. The sequence is that of Probable glycogen synthase (glgA) from Methanocaldococcus jannaschii (strain ATCC 43067 / DSM 2661 / JAL-1 / JCM 10045 / NBRC 100440) (Methanococcus jannaschii).